A 109-amino-acid polypeptide reads, in one-letter code: UPF0060 membrane protein YfjF (109 aa).

The next 4 membrane-spanning stretches (helical) occupy residues 6-26 (ILLFLAAGLAEIGGGYLVWLW), 32-52 (PAGYGIAGALILIVYGILPTF), 61-81 (VYAAYGGVFIVLAVLWGWLVD), and 87-107 (LYDWIGAFICLIGVCVILFAP).

It belongs to the UPF0060 family.

The protein localises to the cell membrane. This is UPF0060 membrane protein YfjF (yfjF) from Bacillus subtilis (strain 168).